Consider the following 632-residue polypeptide: Extracellular metalloproteinase 1 (632 aa).

A signal peptide spans 1 to 19 (MHGLLLAAGLLSLPLRVLA). Positions 20–243 (HPQPSTSLTS…VHNVVDYVSH (224 aa)) are excised as a propeptide. N284 is a glycosylation site (N-linked (GlcNAc...) asparagine). A Zn(2+)-binding site is contributed by H427. The active site involves E428. Zn(2+) is bound at residue H431. Residues N591 and N620 are each glycosylated (N-linked (GlcNAc...) asparagine).

This sequence belongs to the peptidase M36 family. It depends on Zn(2+) as a cofactor.

It is found in the secreted. Its function is as follows. Secreted metalloproteinase that allows assimilation of proteinaceous substrates and probably acts as a virulence factor. The chain is Extracellular metalloproteinase 1 (MEP1) from Arthroderma gypseum (strain ATCC MYA-4604 / CBS 118893) (Microsporum gypseum).